We begin with the raw amino-acid sequence, 218 residues long: Octanoyltransferase (218 aa).

In terms of domain architecture, BPL/LPL catalytic spans 45-218 (AGTADELWLL…TDALQRAIYS (174 aa)). Residues 84 to 91 (RGGQITYH), 151 to 153 (ALG), and 164 to 166 (GLA) each bind substrate. Cys182 functions as the Acyl-thioester intermediate in the catalytic mechanism.

It belongs to the LipB family.

It is found in the cytoplasm. The catalysed reaction is octanoyl-[ACP] + L-lysyl-[protein] = N(6)-octanoyl-L-lysyl-[protein] + holo-[ACP] + H(+). The protein operates within protein modification; protein lipoylation via endogenous pathway; protein N(6)-(lipoyl)lysine from octanoyl-[acyl-carrier-protein]: step 1/2. Catalyzes the transfer of endogenously produced octanoic acid from octanoyl-acyl-carrier-protein onto the lipoyl domains of lipoate-dependent enzymes. Lipoyl-ACP can also act as a substrate although octanoyl-ACP is likely to be the physiological substrate. In Thiobacillus denitrificans (strain ATCC 25259 / T1), this protein is Octanoyltransferase.